Here is a 360-residue protein sequence, read N- to C-terminus: Glutamate 5-kinase (360 aa).

Lysine 11 contacts ATP. Substrate-binding residues include serine 51, aspartate 138, and asparagine 150. Residues 278 to 356 (KGEIHINECA…GKKPVVHYDY (79 aa)) enclose the PUA domain.

This sequence belongs to the glutamate 5-kinase family.

It localises to the cytoplasm. It catalyses the reaction L-glutamate + ATP = L-glutamyl 5-phosphate + ADP. It functions in the pathway amino-acid biosynthesis; L-proline biosynthesis; L-glutamate 5-semialdehyde from L-glutamate: step 1/2. In terms of biological role, catalyzes the transfer of a phosphate group to glutamate to form L-glutamate 5-phosphate. This is Glutamate 5-kinase from Bacteroides thetaiotaomicron (strain ATCC 29148 / DSM 2079 / JCM 5827 / CCUG 10774 / NCTC 10582 / VPI-5482 / E50).